Here is a 110-residue protein sequence, read N- to C-terminus: MPFGWGRGRGRRRKRRMIGFLPQVRHFYPAIPPVSIRQPPIIMTYEEFEALRLVDYEGLTQEEAGKRMGVSRGTLWRALTSARKKVAQMLVEGRELIILPQGNEVVSDEE.

It belongs to the UPF0251 family.

The sequence is that of UPF0251 protein PYRAB12660 from Pyrococcus abyssi (strain GE5 / Orsay).